The following is a 454-amino-acid chain: Glutamyl-tRNA reductase (454 aa).

Substrate is bound by residues T49–R52, S109, E114–Q116, and Q120. The Nucleophile role is filled by C50. Position 189-194 (G189–S194) interacts with NADP(+). Positions D432–Q442 are enriched in basic and acidic residues. The segment at D432–T454 is disordered.

It belongs to the glutamyl-tRNA reductase family. Homodimer.

The enzyme catalyses (S)-4-amino-5-oxopentanoate + tRNA(Glu) + NADP(+) = L-glutamyl-tRNA(Glu) + NADPH + H(+). It functions in the pathway porphyrin-containing compound metabolism; protoporphyrin-IX biosynthesis; 5-aminolevulinate from L-glutamyl-tRNA(Glu): step 1/2. In terms of biological role, catalyzes the NADPH-dependent reduction of glutamyl-tRNA(Glu) to glutamate 1-semialdehyde (GSA). The chain is Glutamyl-tRNA reductase from Shouchella clausii (strain KSM-K16) (Alkalihalobacillus clausii).